Consider the following 196-residue polypeptide: Probable malonic semialdehyde reductase RutE (196 aa).

The protein belongs to the nitroreductase family. HadB/RutE subfamily. It depends on FMN as a cofactor.

It catalyses the reaction 3-hydroxypropanoate + NADP(+) = 3-oxopropanoate + NADPH + H(+). May reduce toxic product malonic semialdehyde to 3-hydroxypropionic acid, which is excreted. The chain is Probable malonic semialdehyde reductase RutE from Escherichia coli O45:K1 (strain S88 / ExPEC).